We begin with the raw amino-acid sequence, 1784 residues long: Sodium channel protein type 4 subunit alpha B (1784 aa).

Residues 1 to 130 (MARLLPPTGT…RAAIRILIHS (130 aa)) are Cytoplasmic-facing. The segment at 29 to 48 (AEEAAEQERMKEQNVKVAEE) is disordered. One copy of the I repeat lies at 112 to 429 (CLSPFNPVRR…VVAMAYAEQN (318 aa)). Residues 131–149 (LFSLVIMLTILTNCVFMAM) form a helical membrane-spanning segment. Residues 150-156 (SDPPGWS) lie on the Extracellular side of the membrane. The helical transmembrane segment at 157–177 (KILEYVFTGIYTFEAMVKVLS) threads the bilayer. The Cytoplasmic portion of the chain corresponds to 178–191 (RGFCIGDFTFLRDP). Residues 192-209 (WNWLDFMVISMAYLTEFV) traverse the membrane as a helical segment. At 210-215 (DLGNIS) the chain is on the extracellular side. N-linked (GlcNAc...) asparagine glycosylation is present at Asn213. A helical membrane pass occupies residues 216-232 (ALRTFRVLRALKTITVI). Topologically, residues 233–251 (PGLKTIVGALIQSVKKLAD) are cytoplasmic. Residues 252–271 (VMILTVFCLSVFALIGLQLF) form a helical membrane-spanning segment. Over 272-366 (MGNLRQKCVL…PNYGYTSYDN (95 aa)) the chain is Extracellular. An intrachain disulfide couples Cys279 to Cys335. Residues Asn291, Asn304, and Asn337 are each glycosylated (N-linked (GlcNAc...) asparagine). A disulfide bridge links Cys344 with Cys350. The pore-forming intramembrane region spans 367–391 (FGWAFLALFRLMTQDFWENLFQLTL). Residues 392-398 (RAAGKTY) are Extracellular-facing. Residues 399-419 (MIFFVVIIFLGSFYLINLILA) form a helical membrane-spanning segment. Residues 420-568 (VVAMAYAEQN…RIVYLFVMDP (149 aa)) are Cytoplasmic-facing. Positions 455–478 (EQKNGMVNGSKTSLSSKKKGDNDQ) are disordered. Residues 550 to 821 (CCIPWVKFKR…QIAISRITRG (272 aa)) form an II repeat. A helical membrane pass occupies residues 569–587 (FVDLGITLCIVLNTVFMAM). Residues 588-598 (EHYPMSVHVEE) are Extracellular-facing. A helical membrane pass occupies residues 599–618 (VLAIGNLVFTGIFAAEMVLK). The Cytoplasmic segment spans residues 619 to 632 (LIALDPYYYFQVGW). A helical transmembrane segment spans residues 633-652 (NIFDSIIVTMSLVELMLADV). Over 653-654 (EG) the chain is Extracellular. A helical membrane pass occupies residues 655–672 (LSVLRSFRLMRVFKLAKS). Residues 673-688 (WPTLNMLIKIIGNSVG) lie on the Cytoplasmic side of the membrane. Residues 689–707 (ALGNLTLVLAIIVFIFAVV) form a helical membrane-spanning segment. At 708 to 736 (GMQLFGKSYTDSVCKISSDCELPRWHMAD) the chain is on the extracellular side. Cysteines 721 and 727 form a disulfide. The segment at residues 737–757 (FFHAFLIIFRVLCGEWIETMW) is an intramembrane region (pore-forming). Residues 758-768 (DCMEVAGQGMC) lie on the Extracellular side of the membrane. Cys759 and Cys768 are oxidised to a cystine. A helical transmembrane segment spans residues 769-787 (IIVFMMVMVIGNLVVLNLF). Residues 788–973 (LALLLSSFSG…TCFAIVEHSY (186 aa)) lie on the Cytoplasmic side of the membrane. The tract at residues 870-928 (PIANGESDDDDGNGSSEDEDDEGRDINMKKKNGDESSTCSTVDKPPEVEDLVEEEEEDL) is disordered. Over residues 875-892 (ESDDDDGNGSSEDEDDEG) the composition is skewed to acidic residues. Residues 893 to 903 (RDINMKKKNGD) show a composition bias toward basic and acidic residues. Residues 917-928 (VEDLVEEEEEDL) show a composition bias toward acidic residues. The stretch at 954–1269 (KGKAWWNFRK…KKYYNAMKKL (316 aa)) is one III repeat. The chain crosses the membrane as a helical span at residues 974-991 (FETFIIFMILLSSGALAF). Residues 992–1004 (EDIYIEQRRMIKI) are Extracellular-facing. Residues 1005-1023 (ILEYADQVFTYVFVVEMLL) traverse the membrane as a helical segment. Residues 1024-1037 (KWVAYGFKVYFTNA) are Cytoplasmic-facing. The chain crosses the membrane as a helical span at residues 1038-1056 (WCWLDFLIVDVSLISLTAN). Residues 1057–1064 (ILGYSELG) lie on the Extracellular side of the membrane. A helical transmembrane segment spans residues 1065 to 1083 (AIKSLRTLRALRPLRALSR). The Cytoplasmic segment spans residues 1084–1101 (FEGMRVVVVNALVGAIPS). A helical membrane pass occupies residues 1102–1121 (IFNVLLVCLIFWLIFSIMGV). The Extracellular portion of the chain corresponds to 1122 to 1173 (NLFAGKFYYCFNETSEEVFDHNVVNNKTDCYELMEFHPEVRWMNGKINFDNV). A disulfide bond links Cys1131 and Cys1151. 2 N-linked (GlcNAc...) asparagine glycosylation sites follow: Asn1133 and Asn1147. Residues 1174 to 1195 (GMGYLALLQVATFKGWMDIMYS) constitute an intramembrane region (pore-forming). At 1196–1212 (AVDSRAIESQPVYEANL) the chain is on the extracellular side. Residues 1213–1234 (YMYIYFVIFIIFGSFFTLNLFI) traverse the membrane as a helical segment. At 1235–1297 (GVIIDNFNQQ…LVFDFVTQQF (63 aa)) the chain is on the cytoplasmic side. The segment at 1253–1255 (IFM) is important for rapid channel inactivation. The stretch at 1278–1575 (IPRPTNCCQG…WEKFDPTASQ (298 aa)) is one IV repeat. The helical transmembrane segment at 1298–1315 (FDIFIMVMICLNMVTMMV) threads the bilayer. At 1316–1326 (ETDDQSAEIEE) the chain is on the extracellular side. Residues 1327 to 1345 (ILFYINFAFIILFTGECVL) form a helical membrane-spanning segment. Residues 1346-1357 (KITALRYHYFSI) lie on the Cytoplasmic side of the membrane. A helical transmembrane segment spans residues 1358-1375 (GWNIFDFVVVILSILGIG). Residues 1376–1388 (LADLIEKYFVSPT) are Extracellular-facing. Residues 1389–1405 (LFRVIRLARIGRVLRLI) traverse the membrane as a helical segment. The Cytoplasmic portion of the chain corresponds to 1406–1424 (RGAKGIRTLLFALMMSLPA). The helical transmembrane segment at 1425 to 1442 (LFNIGLLLFLIMFIFSIF) threads the bilayer. The Extracellular portion of the chain corresponds to 1443–1464 (GMSNFAYVKKEVGIDDMMNFET). An intramembrane region (pore-forming) is located at residues 1465 to 1487 (FGNSIICMFMITTSAGWDGLLAP). The Extracellular portion of the chain corresponds to 1488 to 1516 (ILNSPPDCDPDVDNPGSTTRGNCGNAAVG). A disulfide bridge connects residues Cys1495 and Cys1510. A helical transmembrane segment spans residues 1517 to 1539 (IVFFCSYIVMSFLVVVNMYIAII). Topologically, residues 1540–1784 (LENFNVATEE…AADNLRESIV (245 aa)) are cytoplasmic. Residues 1669-1698 (EEVAASTIQRAYRSHILKRCVKQASYMYRD) enclose the IQ domain.

The protein belongs to the sodium channel (TC 1.A.1.10) family. Nav1.4/SCN4A subfamily. Voltage-gated sodium (Nav) channels consist of an ion-conducting alpha subunit which is functional on its own associated with regulatory beta subunits. Lacks the cysteine which covalently binds the conotoxin GVIIJ. This cysteine (position 719) is speculated in other sodium channel subunits alpha to be implied in covalent binding with the sodium channel subunit beta-2 or beta-4. As to expression, expressed in skeletal muscle, heart, brain, spinal cord, and eye.

It is found in the cell membrane. It catalyses the reaction Na(+)(in) = Na(+)(out). Functionally, pore-forming subunit of a voltage-gated sodium (Nav) channel that directly mediates the depolarizing phase of action potentials in excitable membranes. Navs, also called VGSCs (voltage-gated sodium channels) or VDSCs (voltage-dependent sodium channels), operate by switching between closed and open conformations depending on the voltage difference across the membrane. In the open conformation they allow Na(+) ions to selectively pass through the pore, along their electrochemical gradient. The influx of Na+ ions provokes membrane depolarization, initiating the propagation of electrical signals throughout cells and tissues. The chain is Sodium channel protein type 4 subunit alpha B (scn4ab) from Danio rerio (Zebrafish).